Here is a 51-residue protein sequence, read N- to C-terminus: Large ribosomal subunit protein eL39 (51 aa).

This sequence belongs to the eukaryotic ribosomal protein eL39 family.

This chain is Large ribosomal subunit protein eL39 (rpl39e), found in Methanothermobacter thermautotrophicus (strain ATCC 29096 / DSM 1053 / JCM 10044 / NBRC 100330 / Delta H) (Methanobacterium thermoautotrophicum).